The sequence spans 314 residues: Aspartate carbamoyltransferase catalytic subunit (314 aa).

Carbamoyl phosphate is bound by residues Arg-55 and Thr-56. Lys-83 provides a ligand contact to L-aspartate. The carbamoyl phosphate site is built by Arg-105, His-139, and Gln-142. L-aspartate is bound by residues Arg-172 and Arg-226. Residues Gly-267 and Pro-268 each contribute to the carbamoyl phosphate site.

The protein belongs to the aspartate/ornithine carbamoyltransferase superfamily. ATCase family. Heterododecamer (2C3:3R2) of six catalytic PyrB chains organized as two trimers (C3), and six regulatory PyrI chains organized as three dimers (R2).

The enzyme catalyses carbamoyl phosphate + L-aspartate = N-carbamoyl-L-aspartate + phosphate + H(+). It participates in pyrimidine metabolism; UMP biosynthesis via de novo pathway; (S)-dihydroorotate from bicarbonate: step 2/3. In terms of biological role, catalyzes the condensation of carbamoyl phosphate and aspartate to form carbamoyl aspartate and inorganic phosphate, the committed step in the de novo pyrimidine nucleotide biosynthesis pathway. The chain is Aspartate carbamoyltransferase catalytic subunit from Rhodococcus jostii (strain RHA1).